A 75-amino-acid chain; its full sequence is Dermaseptin-DA2 (75 aa).

A signal peptide spans 1 to 22 (MALVKKSLFLVLFLGLVSLSIC). A propeptide spanning residues 23–42 (EEKRENEDEEEQEDDEQSEE) is cleaved from the precursor.

The protein belongs to the frog skin active peptide (FSAP) family. Dermaseptin subfamily. As to expression, expressed by the skin glands.

It is found in the secreted. Possesses a potent antimicrobial activity against Gram-positive and Gram-negative bacteria. Probably acts by disturbing membrane functions with its amphipathic structure. The chain is Dermaseptin-DA2 from Agalychnis dacnicolor (Giant Mexican leaf frog).